Consider the following 300-residue polypeptide: 4-hydroxy-tetrahydrodipicolinate synthase (300 aa).

Thr-45 lines the pyruvate pocket. Tyr-140 (proton donor/acceptor) is an active-site residue. The Schiff-base intermediate with substrate role is filled by Lys-169. Ile-210 serves as a coordination point for pyruvate.

This sequence belongs to the DapA family. As to quaternary structure, homotetramer; dimer of dimers.

It is found in the cytoplasm. It catalyses the reaction L-aspartate 4-semialdehyde + pyruvate = (2S,4S)-4-hydroxy-2,3,4,5-tetrahydrodipicolinate + H2O + H(+). The protein operates within amino-acid biosynthesis; L-lysine biosynthesis via DAP pathway; (S)-tetrahydrodipicolinate from L-aspartate: step 3/4. Catalyzes the condensation of (S)-aspartate-beta-semialdehyde [(S)-ASA] and pyruvate to 4-hydroxy-tetrahydrodipicolinate (HTPA). The polypeptide is 4-hydroxy-tetrahydrodipicolinate synthase (Helicobacter pylori (strain HPAG1)).